Consider the following 420-residue polypeptide: Pectate lyase (420 aa).

Positions 1 to 21 (MKKVMLATALFLGLTPAGANA) are cleaved as a signal peptide. The segment at 117–139 (TWGKKEPSGTQEEARARSQKNQK) is disordered. Over residues 119 to 132 (GKKEPSGTQEEARA) the composition is skewed to basic and acidic residues. The Ca(2+) site is built by Asp-205, Asp-244, and Asp-248. Arg-300 is an active-site residue.

Belongs to the polysaccharide lyase 1 family. In terms of assembly, monomer. Ca(2+) serves as cofactor.

The protein localises to the secreted. It carries out the reaction Eliminative cleavage of (1-&gt;4)-alpha-D-galacturonan to give oligosaccharides with 4-deoxy-alpha-D-galact-4-enuronosyl groups at their non-reducing ends.. It functions in the pathway glycan metabolism; pectin degradation; 2-dehydro-3-deoxy-D-gluconate from pectin: step 2/5. Its function is as follows. Produces unsaturated products from polygalacturonate. The chain is Pectate lyase (pel) from Bacillus subtilis (strain 168).